We begin with the raw amino-acid sequence, 360 residues long: C-C chemokine receptor-like 2 (360 aa).

The Extracellular segment spans residues 1-42 (MDNYTVAPDDEYDVLILDDYLDNSGPDQVPAPEFLSPQQVLQ). A glycan (N-linked (GlcNAc...) asparagine) is linked at asparagine 3. The helical transmembrane segment at 43–63 (FCCAVFAVGLLDNVLAVFILV) threads the bilayer. Topologically, residues 64–73 (KYKGLKNLGN) are cytoplasmic. A helical membrane pass occupies residues 74-94 (IYFLNLALSNLCFLLPLPFWA). Topologically, residues 95 to 109 (HTAAHGESPGNGTCK) are extracellular. N-linked (GlcNAc...) asparagine glycosylation is present at asparagine 105. Cysteine 108 and cysteine 185 form a disulfide bridge. The chain crosses the membrane as a helical span at residues 110 to 130 (VLVGLHSSGLYSEVFSNILLL). Topologically, residues 131 to 141 (VQGYRVFSQGR) are cytoplasmic. The helical transmembrane segment at 142–162 (LASIFTTVSCGIVACILAWAM) threads the bilayer. Residues 163 to 202 (ATALSLPESVFYEPRMERQKHKCAFGKPHFLPIEAPLWKY) are Extracellular-facing. A helical transmembrane segment spans residues 203-223 (VLTSKMIILVLAFPLLVFIIC). The Cytoplasmic segment spans residues 224–243 (CRQLRRRQSFRERQYDLHKP). A helical membrane pass occupies residues 244–264 (ALVITGVFLLMWAPYNTVLFL). The Extracellular portion of the chain corresponds to 265 to 285 (SAFQEHLSLQDEKSSYHLDAS). The helical transmembrane segment at 286–307 (VQVTQLVATTHCCVNPLLYLLL) threads the bilayer. At 308 to 360 (DRKAFMRYLRSLFPRCNDIPYQSSGGYQQAPPREGHGRPIELYSNLHQRQDII) the chain is on the cytoplasmic side.

This sequence belongs to the G-protein coupled receptor 1 family. In terms of tissue distribution, expressed in macrophages, astrocytes, in glial cells. Constitutively expressed by mast cells. Detected in bronchial epithelium in OVA-induced airway inflammation. Up-regulated during dendritic cell (DC) maturation.

It is found in the cell membrane. Functionally, receptor for CCL19 and chemerin/RARRES2. Does not appear to be a signaling receptor, but may have a role in modulating chemokine-triggered immune responses by capturing and internalizing CCL19 or by presenting RARRES2 ligand to CMKLR1, a functional signaling receptor. Plays a critical role for the development of Th2 responses. In Mus musculus (Mouse), this protein is C-C chemokine receptor-like 2 (Ccrl2).